Consider the following 953-residue polypeptide: Glutamate receptor 3.5 (953 aa).

Residues Met-1–Gly-29 form the signal peptide. At Ala-30–Thr-606 the chain is on the extracellular side. N-linked (GlcNAc...) asparagine glycosylation is found at Asn-38, Asn-95, Asn-223, Asn-371, Asn-397, Asn-436, Asn-454, and Asn-569. Residues Ile-607–Leu-627 form a helical membrane-spanning segment. Topologically, residues Glu-628–Arg-636 are cytoplasmic. The chain crosses the membrane as a helical span at residues Gly-637–Ser-657. Residues His-658 to Arg-668 are Cytoplasmic-facing. The helical transmembrane segment at Phe-669 to Leu-689 threads the bilayer. The Extracellular portion of the chain corresponds to Thr-690–Ser-850. A helical membrane pass occupies residues Phe-851 to Trp-871. The Cytoplasmic portion of the chain corresponds to Lys-872–Gln-953. The segment at Glu-928–Gln-953 is disordered.

This sequence belongs to the glutamate-gated ion channel (TC 1.A.10.1) family. As to quaternary structure, may form heteromers. As to expression, expressed predominantly in roots. Also detected in shoots.

The protein resides in the membrane. Glutamate-gated receptor that probably acts as a non-selective cation channel. May be involved in light-signal transduction and calcium homeostasis via the regulation of calcium influx into cells. The polypeptide is Glutamate receptor 3.5 (GLR3.5) (Arabidopsis thaliana (Mouse-ear cress)).